Consider the following 449-residue polypeptide: Nuclear hormone receptor family member nhr-43 (449 aa).

The nuclear receptor DNA-binding region spans 44 to 122; sequence NIHCRVCERR…VGLNVDAVVG (79 aa). NR C4-type zinc fingers lie at residues 47–68 and 84–105; these read CRVCERRYDGSQHFGIDICRAC and CRRGTNKCELNTVSRKTTCQKC. The segment covering 125–142 has biased composition (basic and acidic residues); that stretch reads SPDHVKTTSRDESVKKED. Positions 125 to 154 are disordered; it reads SPDHVKTTSRDESVKKEDEESDTGSEGKSC. The 250-residue stretch at 200–449 folds into the NR LBD domain; sequence NYNEFTKSRL…SDLNAYLYSI (250 aa).

It is found in the nucleus. Functionally, ligand-activated transcription factor. Positively modulates expression of homeobox protein lin-39, perhaps by binding to the sequence motif 5'-TGAC-3' in regulatory regions of the lin-39 gene, acting in the embryo, and also in the vulval lineage. This Caenorhabditis elegans protein is Nuclear hormone receptor family member nhr-43.